The chain runs to 448 residues: Trigger factor (448 aa).

The PPIase FKBP-type domain maps to 172-257 (GDRVTVDFVG…MKKIEWPHLP (86 aa)).

The protein belongs to the FKBP-type PPIase family. Tig subfamily.

The protein resides in the cytoplasm. The catalysed reaction is [protein]-peptidylproline (omega=180) = [protein]-peptidylproline (omega=0). Involved in protein export. Acts as a chaperone by maintaining the newly synthesized protein in an open conformation. Functions as a peptidyl-prolyl cis-trans isomerase. This is Trigger factor from Burkholderia lata (strain ATCC 17760 / DSM 23089 / LMG 22485 / NCIMB 9086 / R18194 / 383).